We begin with the raw amino-acid sequence, 324 residues long: MPRFYLLSSCALLAFATSFCNAEKSQIRMPGVVPEADSYLCTSLELSDQENYLTGFKALTTKGTAHHILLFGCEEPGSDELVWDCGEMNKPDDEMPRAPTCGSKPAILYAWALDAPPLELPQDVGFRVGGDSNIRHLVMQVHYMHSKQEPDETGLEITHTEEPQPKLAATMLLVTGGTLPRNKTESFETACMIEEDVVMHPFAYRTHTHRHGKEVSGWLVKEDQKHEDHWKLIGRRDPQLAQMFVPVEDQAMTIQQGDMVTARCILQNNENRDISMGATEEDEMCNFYIMYWTDGEVMQDNTCYSPGAPDYKWAREADLNHIPK.

Residues 1-22 form the signal peptide; that stretch reads MPRFYLLSSCALLAFATSFCNA. 2 cysteine pairs are disulfide-bonded: cysteine 41–cysteine 85 and cysteine 73–cysteine 101. Residues histidine 66 and histidine 67 each contribute to the Cu cation site. A Cu cation-binding site is contributed by histidine 142. Asparagine 182 carries an N-linked (GlcNAc...) asparagine glycan. Residues histidine 207, histidine 209, and methionine 284 each contribute to the Cu cation site. A disulfide bridge links cysteine 264 with cysteine 285.

It belongs to the copper type II ascorbate-dependent monooxygenase family. It depends on Cu(2+) as a cofactor.

It is found in the secreted. It catalyses the reaction a [peptide]-C-terminal glycine + 2 L-ascorbate + O2 = a [peptide]-C-terminal (2S)-2-hydroxyglycine + 2 monodehydro-L-ascorbate radical + H2O. Monooxygenase that catalyzes an essential reaction in C-terminal alpha-amidation of peptides. Produces an unstable peptidyl(2-hydroxyglycine) intermediate. C-terminal amidation of peptides such as neuropeptides is essential for full biological activity. The protein is Probable peptidylglycine alpha-hydroxylating monooxygenase 1 of Caenorhabditis elegans.